An 874-amino-acid polypeptide reads, in one-letter code: Alanine--tRNA ligase (874 aa).

Residues His-564, His-568, Cys-665, and His-669 each coordinate Zn(2+).

It belongs to the class-II aminoacyl-tRNA synthetase family. Zn(2+) serves as cofactor.

It localises to the cytoplasm. It carries out the reaction tRNA(Ala) + L-alanine + ATP = L-alanyl-tRNA(Ala) + AMP + diphosphate. Catalyzes the attachment of alanine to tRNA(Ala) in a two-step reaction: alanine is first activated by ATP to form Ala-AMP and then transferred to the acceptor end of tRNA(Ala). Also edits incorrectly charged Ser-tRNA(Ala) and Gly-tRNA(Ala) via its editing domain. The protein is Alanine--tRNA ligase of Burkholderia cenocepacia (strain HI2424).